Consider the following 714-residue polypeptide: Fatty acid oxidation complex subunit alpha (714 aa).

Positions 1–190 are enoyl-CoA hydratase; sequence MEMASAFTLN…KLGLVDDVVP (190 aa). Residues 306–714 are 3-hydroxyacyl-CoA dehydrogenase; it reads APLNSVGILG…FWKTTATDLQ (409 aa).

It in the N-terminal section; belongs to the enoyl-CoA hydratase/isomerase family. In the central section; belongs to the 3-hydroxyacyl-CoA dehydrogenase family. Heterotetramer of two alpha chains (FadJ) and two beta chains (FadI).

The protein resides in the cytoplasm. It carries out the reaction a (3S)-3-hydroxyacyl-CoA = a (2E)-enoyl-CoA + H2O. The catalysed reaction is a 4-saturated-(3S)-3-hydroxyacyl-CoA = a (3E)-enoyl-CoA + H2O. The enzyme catalyses a (3S)-3-hydroxyacyl-CoA + NAD(+) = a 3-oxoacyl-CoA + NADH + H(+). It catalyses the reaction (3S)-3-hydroxybutanoyl-CoA = (3R)-3-hydroxybutanoyl-CoA. It participates in lipid metabolism; fatty acid beta-oxidation. Functionally, catalyzes the formation of a hydroxyacyl-CoA by addition of water on enoyl-CoA. Also exhibits 3-hydroxyacyl-CoA epimerase and 3-hydroxyacyl-CoA dehydrogenase activities. The sequence is that of Fatty acid oxidation complex subunit alpha from Escherichia coli O6:K15:H31 (strain 536 / UPEC).